A 269-amino-acid polypeptide reads, in one-letter code: uncharacterized protein (269 aa).

A DNA-binding region (ompR/PhoB-type) is located at residues 3–105 (WIINDNIEFW…VPRRGFKIHN (103 aa)).

The protein to V.cholerae cholera toxin transcriptional activator (ToxR).

This is an uncharacterized protein from Escherichia coli (strain K12).